The following is a 277-amino-acid chain: Collectin-10 (277 aa).

The N-terminal stretch at 1–27 is a signal peptide; sequence MNGFRVLLRSNLSMLLLLALLHFQSLG. A glycan (N-linked (GlcNAc...) asparagine) is linked at asparagine 11. Residues 41–103 form a disordered region; that stretch reads THTISPGPKG…IGKKGDKGEK (63 aa). The Collagen-like domain occupies 45–103; it reads SPGPKGDDGERGDTGEEGKDGKVGRQGPKGVKGELGDMGAQGNIGKSGPIGKKGDKGEK. A compositionally biased stretch (basic and acidic residues) spans 49–67; that stretch reads KGDDGERGDTGEEGKDGKV. Residues 155–271 enclose the C-type lectin domain; the sequence is TEEKFYYIVQ…CHLTMYFVCE (117 aa). Intrachain disulfides connect cysteine 176-cysteine 270 and cysteine 248-cysteine 262. Asparagine 258 carries N-linked (GlcNAc...) asparagine glycosylation.

The protein belongs to the COLEC10/COLEC11 family. As to expression, expressed mainly in the liver and stomach, but also in muscles, testes, and intestines.

The protein localises to the secreted. It localises to the golgi apparatus. It is found in the cytoplasm. Lectin that binds to various sugars: galactose &gt; mannose = fucose &gt; N-acetylglucosamine &gt; N-acetylgalactosamine. Acts as a chemoattractant, probably involved in the regulation of cell migration. The protein is Collectin-10 (Colec10) of Mus musculus (Mouse).